The sequence spans 97 residues: Essential MCU regulator, mitochondrial (97 aa).

The transit peptide at 1-37 (MAARMGVLSVAGFRAAARAGGLLARPKQSTAVVPCRT) directs the protein to the mitochondrion. Topologically, residues 38–55 (VIASSAGAILPKPEKVSF) are mitochondrial matrix. The helical transmembrane segment at 56-75 (GLLRVFTVVIPFLYIGTLIS) threads the bilayer. At 76–97 (KNFAAVLEEHDIFVPEDDDDDD) the chain is on the mitochondrial intermembrane side.

Belongs to the SMDT1/EMRE family. Component of the uniplex complex.

Its subcellular location is the mitochondrion inner membrane. Essential regulatory subunit of the mitochondrial calcium uniporter complex (uniplex), a complex that mediates calcium uptake into mitochondria. Required to bridge the calcium-sensing proteins micu1 with the calcium-conducting subunit mcu. Acts by mediating activation of mcu and retention of micu1 to the mcu pore, in order to ensure tight regulation of the uniplex complex and appropriate responses to intracellular calcium signaling. This Xenopus laevis (African clawed frog) protein is Essential MCU regulator, mitochondrial.